The chain runs to 318 residues: Pyrimidine-specific ribonucleoside hydrolase RihA (318 aa).

Residue His-240 is part of the active site.

Belongs to the IUNH family. RihA subfamily.

In terms of biological role, hydrolyzes cytidine or uridine to ribose and cytosine or uracil, respectively. The polypeptide is Pyrimidine-specific ribonucleoside hydrolase RihA (Shewanella sp. (strain MR-7)).